Consider the following 178-residue polypeptide: Large ribosomal subunit protein uL10 (178 aa).

It belongs to the universal ribosomal protein uL10 family. In terms of assembly, part of the ribosomal stalk of the 50S ribosomal subunit. The N-terminus interacts with L11 and the large rRNA to form the base of the stalk. The C-terminus forms an elongated spine to which L12 dimers bind in a sequential fashion forming a multimeric L10(L12)X complex.

Functionally, forms part of the ribosomal stalk, playing a central role in the interaction of the ribosome with GTP-bound translation factors. This is Large ribosomal subunit protein uL10 from Leuconostoc mesenteroides subsp. mesenteroides (strain ATCC 8293 / DSM 20343 / BCRC 11652 / CCM 1803 / JCM 6124 / NCDO 523 / NBRC 100496 / NCIMB 8023 / NCTC 12954 / NRRL B-1118 / 37Y).